Here is a 528-residue protein sequence, read N- to C-terminus: Major facilitator-type transporter psiT2 (528 aa).

A disordered region spans residues 1-20 (MSPERSASLEPDEHSSLLSD). 5 helical membrane passes run 87 to 107 (FYSG…IFML), 125 to 145 (LGVA…MMLV), 148 to 168 (VCAG…SELT), 174 to 194 (ALVV…GPLI), and 220 to 240 (FLPS…GYFF). The segment covering 260–270 (STSSISSRTST) has biased composition (low complexity). Residues 260 to 299 (STSSISSRTSTLYGATDDHNRDASESTALSPEEAEDEIDS) form a disordered region. 6 helical membrane-spanning segments follow: residues 322–342 (FLMF…FTAV), 357–377 (AFSV…PWVL), 388–408 (FCMF…PLAQ), 424–444 (GLLY…VMAF), 460–479 (LATA…ALCP), and 493–513 (NILG…AGVW).

Belongs to the major facilitator superfamily. TCR/Tet family.

The protein resides in the membrane. Its function is as follows. Major facilitator-type transporter; part of the gene cluster that mediates the biosynthesis of psilocybin, a psychotropic tryptamine-derived natural product. The sequence is that of Major facilitator-type transporter psiT2 from Psilocybe cyanescens.